The following is a 103-amino-acid chain: N(4)-acetylcytidine amidohydrolase (103 aa).

One can recognise an ASCH domain in the interval 6–101 (ITFFQRFQDD…QTQFYVIEFK (96 aa)). The active-site Proton acceptor is the Lys21. Thr24 (nucleophile) is an active-site residue. Glu74 functions as the Proton donor in the catalytic mechanism.

Belongs to the N(4)-acetylcytidine amidohydrolase family.

It carries out the reaction N(4)-acetylcytidine + H2O = cytidine + acetate + H(+). The catalysed reaction is N(4)-acetyl-2'-deoxycytidine + H2O = 2'-deoxycytidine + acetate + H(+). The enzyme catalyses N(4)-acetylcytosine + H2O = cytosine + acetate + H(+). Catalyzes the hydrolysis of N(4)-acetylcytidine (ac4C). This Escherichia coli O8 (strain IAI1) protein is N(4)-acetylcytidine amidohydrolase (yqfB).